The chain runs to 260 residues: Hydroxyethylthiazole kinase 1 (260 aa).

Residue Met39 participates in substrate binding. Residues Arg115 and Thr160 each contribute to the ATP site. Residue Gly187 coordinates substrate.

This sequence belongs to the Thz kinase family. It depends on Mg(2+) as a cofactor.

It catalyses the reaction 5-(2-hydroxyethyl)-4-methylthiazole + ATP = 4-methyl-5-(2-phosphooxyethyl)-thiazole + ADP + H(+). It functions in the pathway cofactor biosynthesis; thiamine diphosphate biosynthesis; 4-methyl-5-(2-phosphoethyl)-thiazole from 5-(2-hydroxyethyl)-4-methylthiazole: step 1/1. In terms of biological role, catalyzes the phosphorylation of the hydroxyl group of 4-methyl-5-beta-hydroxyethylthiazole (THZ). In Streptococcus pneumoniae (strain 70585), this protein is Hydroxyethylthiazole kinase 1.